Reading from the N-terminus, the 186-residue chain is TATA box-binding protein-like 1 (186 aa).

The protein belongs to the TBP family. In terms of tissue distribution, expressed ubiquitously with highest expression in the ovary and testis.

The protein resides in the cytoplasm. Its subcellular location is the nucleus. Its function is as follows. Part of a specialized transcription system that mediates the transcription of most ribosomal proteins through the 5'-TCT-3' motif which is a core promoter element at these genes. Seems to also mediate the transcription of NF1. Does not bind the TATA box. Members of the TBP family are differentially required to regulate transcription and development during early embryogenesis. Particularly regulates genes that have a role in catabolism. The chain is TATA box-binding protein-like 1 (tbpl1) from Xenopus laevis (African clawed frog).